Here is a 185-residue protein sequence, read N- to C-terminus: Ribosome-recycling factor (185 aa).

The disordered stretch occupies residues 143–163 (EKEKLISEDDNKKGMDDIQKE).

This sequence belongs to the RRF family.

The protein resides in the cytoplasm. Its function is as follows. Responsible for the release of ribosomes from messenger RNA at the termination of protein biosynthesis. May increase the efficiency of translation by recycling ribosomes from one round of translation to another. The protein is Ribosome-recycling factor of Syntrophomonas wolfei subsp. wolfei (strain DSM 2245B / Goettingen).